We begin with the raw amino-acid sequence, 132 residues long: Small ribosomal subunit protein eS6 (132 aa).

This sequence belongs to the eukaryotic ribosomal protein eS6 family.

This is Small ribosomal subunit protein eS6 from Methanoculleus marisnigri (strain ATCC 35101 / DSM 1498 / JR1).